A 342-amino-acid chain; its full sequence is Foldase protein PrsA (342 aa).

Positions 1 to 20 are cleaved as a signal peptide; it reads MKKKLILAAAGAMAVFSLAA. Cys-21 carries N-palmitoyl cysteine lipidation. Cys-21 carries S-diacylglycerol cysteine lipidation. Residues 142–235 enclose the PpiC domain; sequence HPEVEAQIIQ…QTYQTTYYVV (94 aa). Positions 297 to 342 are disordered; that stretch reads MQTESSSASSEKKESKSSDSKTSDTKTSDSEKATDSSSKTTESSSK. Basic and acidic residues predominate over residues 306–330; it reads SEKKESKSSDSKTSDTKTSDSEKAT. The segment covering 331–342 has biased composition (low complexity); it reads DSSSKTTESSSK.

The protein belongs to the PrsA family.

It is found in the cell membrane. It catalyses the reaction [protein]-peptidylproline (omega=180) = [protein]-peptidylproline (omega=0). Plays a major role in protein secretion by helping the post-translocational extracellular folding of several secreted proteins. The chain is Foldase protein PrsA from Enterococcus faecalis (strain ATCC 700802 / V583).